The chain runs to 205 residues: H/ACA ribonucleoprotein complex subunit GAR1 (205 aa).

The span at 1-23 (MSFRGGNRGGRGGFRGGFRGGRT) shows a compositional bias: gly residues. The segment at 1-31 (MSFRGGNRGGRGGFRGGFRGGRTGSARSFQQ) is disordered. R4 is modified (asymmetric dimethylarginine; by HMT1). The interval 4–21 (RGGNRGGRGGFRGGFRGG) is RGG-box 1. Residue R8 is modified to Asymmetric dimethylarginine; by HMT1; alternate. Position 8 is an omega-N-methylarginine; by HMT1; alternate (R8). R11 is subject to Asymmetric dimethylarginine; by HMT1. Asymmetric dimethylarginine; by HMT1; alternate is present on R15. Omega-N-methylarginine; by HMT1; alternate is present on R15. R19 is subject to Asymmetric dimethylarginine; by HMT1. Residue K77 forms a Glycyl lysine isopeptide (Lys-Gly) (interchain with G-Cter in ubiquitin) linkage. Residues 124–205 (PKPKVVGPPK…SRGGFRGGRR (82 aa)) are disordered. The span at 143–205 (APGGRGGASM…SRGGFRGGRR (63 aa)) shows a compositional bias: gly residues. R147, R154, and R158 each carry asymmetric dimethylarginine; by HMT1; alternate. 3 positions are modified to omega-N-methylarginine; by HMT1; alternate: R147, R154, and R158. The segment at 147-205 (RGGASMGRGGSRGGFRGGRGGSSFRGGRGGSSFRGGSRGGSFRGGSRGGSRGGFRGGRR) is RGG-box 2. R162 carries the post-translational modification Asymmetric dimethylarginine; by HMT1. R165 bears the Asymmetric dimethylarginine; by HMT1; alternate mark. R165 carries the post-translational modification Omega-N-methylarginine; by HMT1; alternate. R171 and R174 each carry asymmetric dimethylarginine; by HMT1. R180 and R184 each carry omega-N-methylarginine; by HMT1. Asymmetric dimethylarginine; by HMT1; alternate is present on R189. R189 is subject to Omega-N-methylarginine; by HMT1; alternate. Asymmetric dimethylarginine; by HMT1 occurs at positions 193, 197, and 201.

This sequence belongs to the GAR1 family. Component of the small nucleolar ribonucleoprotein particles containing H/ACA-type snoRNAs (H/ACA snoRNPs). The protein component of the H/ACA snoRNP contains CBF5, GAR1, NHP2 and NOP10. The complex contains a stable core composed of CBF5 and NOP10, to which GAR1 and NHP2 subsequently bind. Interacts with snoRNAs. Methylated by HMT1, forming asymmetric dimethylarginines (DMA) within a domain referred to as an RGG box, made up of repeated Gly-Gly dipeptides interspersed with Arg and aromatic residues.

The protein resides in the nucleus. The protein localises to the nucleolus. Functionally, non-catalytic component of the H/ACA small nucleolar ribonucleoprotein (H/ACA snoRNP), which catalyzes pseudouridylation of rRNA and is required for ribosome biogenesis. This involves the isomerization of uridine such that the ribose is subsequently attached to C5, instead of the normal N1. Pseudouridine ('psi') residues may serve to stabilize the conformation of rRNAs. The H/ACA snoRNP complex also mediates pseudouridylation of other types of RNAs. The H/ACA snoRNP complex mediates pseudouridylation at position 93 in U2 snRNA. Essential for growth. The protein is H/ACA ribonucleoprotein complex subunit GAR1 of Saccharomyces cerevisiae (strain ATCC 204508 / S288c) (Baker's yeast).